Here is a 199-residue protein sequence, read N- to C-terminus: Peroxynitrite isomerase (199 aa).

Residues 21-27 carry the GXWXGXG motif; that stretch reads GEWEGRG. Residue histidine 190 coordinates heme b.

It belongs to the nitrobindin family. As to quaternary structure, homodimer. The cofactor is heme b.

The catalysed reaction is peroxynitrite = nitrate. Its pathway is nitrogen metabolism. Heme-binding protein able to scavenge peroxynitrite and to protect free L-tyrosine against peroxynitrite-mediated nitration, by acting as a peroxynitrite isomerase that converts peroxynitrite to nitrate. Therefore, this protein likely plays a role in peroxynitrite sensing and in the detoxification of reactive nitrogen and oxygen species (RNS and ROS, respectively). Is able to bind nitric oxide (NO) in vitro, but may act as a sensor of peroxynitrite levels in vivo. This chain is Peroxynitrite isomerase, found in Paenarthrobacter aurescens (strain TC1).